The chain runs to 533 residues: Receptor homology region, transmembrane domain- and RING domain-containing protein 1 (533 aa).

The signal sequence occupies residues 1 to 26 (MNRRRTMLLLICLCATFCLMTQLGAA). Topologically, residues 27-167 (NVVLMGTNLT…LPAFENSAWS (141 aa)) are lumenal. Asn-34 carries an N-linked (GlcNAc...) asparagine glycan. Cys-68 and Cys-91 are oxidised to a cystine. The PA domain occupies 84 to 145 (ALIIRGGCTF…ISKASGEVLK (62 aa)). Residues 168–188 (IMAISFISLLAMSAVLATCFF) form a helical membrane-spanning segment. The Cytoplasmic segment spans residues 189-533 (VRRHHIRRDR…MASAQSLPGC (345 aa)). The RING-type; atypical zinc finger occupies 236–278 (CAICLEDYNVGEKLRVLPCRHKFHAACVDLWLTTWRTFCPVCK). Disordered regions lie at residues 309 to 329 (SFRS…PSSQ) and 440 to 476 (LRRC…LAGA). The segment covering 448 to 463 (PSLSTMAPQSPQQSQL) has biased composition (polar residues).

The protein resides in the prevacuolar compartment membrane. Its subcellular location is the protein storage vacuole membrane. It is found in the golgi apparatus membrane. In terms of biological role, involved in the trafficking of vacuolar proteins. Functions probably as a sorting receptor for protein trafficking to the protein storage vacuole (PSV) by binding the C-terminal vacuolar sorting determinant (VSD) of vacuolar-sorted proteins. The sequence is that of Receptor homology region, transmembrane domain- and RING domain-containing protein 1 from Oryza sativa subsp. japonica (Rice).